Reading from the N-terminus, the 156-residue chain is Small ribosomal subunit protein uS7 (156 aa).

This sequence belongs to the universal ribosomal protein uS7 family. Part of the 30S ribosomal subunit. Contacts proteins S9 and S11.

One of the primary rRNA binding proteins, it binds directly to 16S rRNA where it nucleates assembly of the head domain of the 30S subunit. Is located at the subunit interface close to the decoding center, probably blocks exit of the E-site tRNA. The protein is Small ribosomal subunit protein uS7 of Tolumonas auensis (strain DSM 9187 / NBRC 110442 / TA 4).